The following is a 265-amino-acid chain: Glutamate racemase (265 aa).

Residues 7–8 (DS) and 39–40 (YG) each bind substrate. C71 serves as the catalytic Proton donor/acceptor. Residue 72–73 (NT) participates in substrate binding. Residue C184 is the Proton donor/acceptor of the active site. 185–186 (TH) lines the substrate pocket.

Belongs to the aspartate/glutamate racemases family.

The catalysed reaction is L-glutamate = D-glutamate. It participates in cell wall biogenesis; peptidoglycan biosynthesis. In terms of biological role, provides the (R)-glutamate required for cell wall biosynthesis. This chain is Glutamate racemase, found in Sulfurovum sp. (strain NBC37-1).